The sequence spans 71 residues: Conotoxin Vc6.12 (71 aa).

The first 19 residues, 1–19, serve as a signal peptide directing secretion; the sequence is MQKLIILLLVAAVLMSTQA. Positions 20-43 are excised as a propeptide; sequence LFQEKRPMKKINFLSKGKTDAEKQ. Disulfide bonds link cysteine 48–cysteine 62, cysteine 55–cysteine 66, and cysteine 61–cysteine 70.

The protein belongs to the conotoxin O2 superfamily. In terms of tissue distribution, expressed by the venom duct.

It localises to the secreted. Inhibits voltage-gated ion channels. This is Conotoxin Vc6.12 from Conus victoriae (Queen Victoria cone).